Consider the following 2511-residue polypeptide: Chromodomain-helicase-DNA-binding protein 8 (2511 aa).

Residues 484–615 (PRVLNQDELP…RSNRQVKRKK (132 aa)) are disordered. The span at 515–524 (GGGVGGGGGG) shows a compositional bias: gly residues. Positions 604–615 (KRRSNRQVKRKK) are enriched in basic residues. Chromo domains lie at 680–745 (AIVD…AQMR) and 760–826 (VEVD…RTPR). The region spanning 859-1033 (LFNWYNRQNC…FSLLHFLEPA (175 aa)) is the Helicase ATP-binding domain. 872–879 (DEMGLGKT) lines the ATP pocket. Positions 984 to 987 (DEAH) match the DEAH box motif. The 157-residue stretch at 1174–1330 (LLDKLLPRLK…SMSGNKESSI (157 aa)) folds into the Helicase C-terminal domain. Disordered regions lie at residues 1440–1482 (TRQF…HSGG), 1715–1736 (EQQAADPELGEGGDYDKYSEDP), 2086–2168 (SKNN…LTDP), and 2468–2511 (PSAL…SSED). Residues 1452-1461 (DLSDLDSDDD) show a composition bias toward acidic residues. Low complexity predominate over residues 2111 to 2125 (DSGSSSSSRHSGSSD).

This sequence belongs to the SNF2/RAD54 helicase family. CHD8 subfamily. Component of some MLL1/MLL complex.

Its subcellular location is the nucleus. It catalyses the reaction ATP + H2O = ADP + phosphate + H(+). Functionally, ATP-dependent chromatin-remodeling factor, it slides nucleosomes along DNA; nucleosome sliding requires ATP. Acts as a transcription repressor by remodeling chromatin structure and recruiting histone H1 to target genes. Suppresses p53/tp53-mediated apoptosis by recruiting histone H1 and preventing p53/tp53 transactivation activity. Acts as a negative regulator of Wnt signaling pathway by regulating beta-catenin (ctnnb1) activity. Negatively regulates ctnnb1-targeted gene expression by being recruited specifically to the promoter regions of several ctnnb1 responsive genes. May also act as a transcription activator by participating in efficient U6 RNA polymerase III transcription. This Danio rerio (Zebrafish) protein is Chromodomain-helicase-DNA-binding protein 8.